Reading from the N-terminus, the 570-residue chain is Sulfite reductase [NADPH] hemoprotein beta-component (570 aa).

The [4Fe-4S] cluster site is built by Cys434, Cys440, Cys479, and Cys483. Siroheme is bound at residue Cys483.

This sequence belongs to the nitrite and sulfite reductase 4Fe-4S domain family. In terms of assembly, alpha(8)-beta(8). The alpha component is a flavoprotein, the beta component is a hemoprotein. It depends on siroheme as a cofactor. Requires [4Fe-4S] cluster as cofactor.

It catalyses the reaction hydrogen sulfide + 3 NADP(+) + 3 H2O = sulfite + 3 NADPH + 4 H(+). The protein operates within sulfur metabolism; hydrogen sulfide biosynthesis; hydrogen sulfide from sulfite (NADPH route): step 1/1. Its function is as follows. Component of the sulfite reductase complex that catalyzes the 6-electron reduction of sulfite to sulfide. This is one of several activities required for the biosynthesis of L-cysteine from sulfate. This is Sulfite reductase [NADPH] hemoprotein beta-component from Salmonella agona (strain SL483).